A 161-amino-acid chain; its full sequence is Peptidyl-prolyl cis-trans isomerase 10 (161 aa).

The PPIase cyclophilin-type domain occupies M1–I153.

This sequence belongs to the cyclophilin-type PPIase family. PPIL3 subfamily.

It carries out the reaction [protein]-peptidylproline (omega=180) = [protein]-peptidylproline (omega=0). Its function is as follows. PPIases accelerate the folding of proteins. It catalyzes the cis-trans isomerization of proline imidic peptide bonds in oligopeptides. This is Peptidyl-prolyl cis-trans isomerase 10 (cyn-10) from Caenorhabditis elegans.